Here is a 609-residue protein sequence, read N- to C-terminus: UvrABC system protein C (609 aa).

Residues 15–92 enclose the GIY-YIG domain; it reads TGSGVYQMQD…IKQFRPRYNV (78 aa). The region spanning 202–237 is the UVR domain; it reads DQVIIKLTERMEVTSENLVFEEAAHYRDQIRQLRRL.

The protein belongs to the UvrC family. Interacts with UvrB in an incision complex.

It is found in the cytoplasm. Functionally, the UvrABC repair system catalyzes the recognition and processing of DNA lesions. UvrC both incises the 5' and 3' sides of the lesion. The N-terminal half is responsible for the 3' incision and the C-terminal half is responsible for the 5' incision. The chain is UvrABC system protein C from Coxiella burnetii (strain RSA 493 / Nine Mile phase I).